The primary structure comprises 495 residues: Glucokinase (495 aa).

The region spanning Ser3–Leu483 is the Hexokinase domain. A hexokinase small subdomain region spans residues Asn57–Val206. Residue Lys93 coordinates ATP. The interval Asp149 to Phe175 is glucose-binding. The hexokinase large subdomain stretch occupies residues Asn207–Asp472. An ATP-binding site is contributed by Asp472–Gly477.

Belongs to the hexokinase family. Monomer.

The enzyme catalyses D-glucose + ATP = D-glucose 6-phosphate + ADP + H(+). The catalysed reaction is a D-hexose + ATP = a D-hexose 6-phosphate + ADP + H(+). It carries out the reaction D-mannose + ATP = D-mannose 6-phosphate + ADP + H(+). It catalyses the reaction D-glucosamine + ATP = D-glucosamine 6-phosphate + ADP + H(+). It functions in the pathway carbohydrate metabolism; hexose metabolism. Its pathway is carbohydrate degradation; glycolysis; D-glyceraldehyde 3-phosphate and glycerone phosphate from D-glucose: step 1/4. The enzyme has great affinity for glucose. Mannose, 2-deoxyglucose and glucosamine can serve as substrates. The protein is Glucokinase (glkA) of Aspergillus niger.